A 385-amino-acid chain; its full sequence is Ethanolamine kinase 2 (385 aa).

Belongs to the choline/ethanolamine kinase family.

The catalysed reaction is ethanolamine + ATP = phosphoethanolamine + ADP + H(+). The protein operates within phospholipid metabolism; phosphatidylethanolamine biosynthesis; phosphatidylethanolamine from ethanolamine: step 1/3. In terms of biological role, highly specific for ethanolamine phosphorylation. Does not have choline kinase activity. The protein is Ethanolamine kinase 2 (Etnk2) of Rattus norvegicus (Rat).